Consider the following 125-residue polypeptide: Small ribosomal subunit protein uS12 (125 aa).

The residue at position 89 (aspartate 89) is a 3-methylthioaspartic acid.

Belongs to the universal ribosomal protein uS12 family. Part of the 30S ribosomal subunit. Contacts proteins S8 and S17. May interact with IF1 in the 30S initiation complex.

Functionally, with S4 and S5 plays an important role in translational accuracy. Interacts with and stabilizes bases of the 16S rRNA that are involved in tRNA selection in the A site and with the mRNA backbone. Located at the interface of the 30S and 50S subunits, it traverses the body of the 30S subunit contacting proteins on the other side and probably holding the rRNA structure together. The combined cluster of proteins S8, S12 and S17 appears to hold together the shoulder and platform of the 30S subunit. This Clostridium acetobutylicum (strain ATCC 824 / DSM 792 / JCM 1419 / IAM 19013 / LMG 5710 / NBRC 13948 / NRRL B-527 / VKM B-1787 / 2291 / W) protein is Small ribosomal subunit protein uS12.